We begin with the raw amino-acid sequence, 282 residues long: NADPH-dependent 7-cyano-7-deazaguanine reductase (282 aa).

88-90 (IES) provides a ligand contact to substrate. 90–91 (SK) is an NADPH binding site. Residue C190 is the Thioimide intermediate of the active site. D197 functions as the Proton donor in the catalytic mechanism. 229-230 (HE) lines the substrate pocket. 258–259 (RG) is a binding site for NADPH.

It belongs to the GTP cyclohydrolase I family. QueF type 2 subfamily. Homodimer.

It is found in the cytoplasm. It carries out the reaction 7-aminomethyl-7-carbaguanine + 2 NADP(+) = 7-cyano-7-deazaguanine + 2 NADPH + 3 H(+). It functions in the pathway tRNA modification; tRNA-queuosine biosynthesis. Catalyzes the NADPH-dependent reduction of 7-cyano-7-deazaguanine (preQ0) to 7-aminomethyl-7-deazaguanine (preQ1). The chain is NADPH-dependent 7-cyano-7-deazaguanine reductase from Salmonella heidelberg (strain SL476).